We begin with the raw amino-acid sequence, 196 residues long: Calcineurin B homologous protein 2 (196 aa).

Residue glycine 2 is the site of N-myristoyl glycine attachment. 4 EF-hand domains span residues 26–61 (ASLL…AVNP), 71–106 (FPDG…PKKP), 111–146 (SRRN…MVGV), and 152–187 (QLEN…MDVE). The residue at position 27 (serine 27) is a Phosphoserine. 5 residues coordinate Ca(2+): aspartate 124, aspartate 126, aspartate 128, lysine 130, and glutamate 135. The Nuclear export signal signature appears at 137 to 148 (LQVLRLMVGVQV). Residues aspartate 165, aspartate 167, aspartate 169, and glutamate 176 each coordinate Ca(2+).

The protein belongs to the calcineurin regulatory subunit family. CHP subfamily. Interacts with PPP3CA. Interacts with SLC9A1/NHE1; the interaction occurs in a calcium-dependent manner. As to expression, expressed in malignantly transformed cells but not detected in normal tissues.

Its subcellular location is the nucleus. It is found in the cytoplasm. The protein resides in the cell membrane. Its function is as follows. Functions as an integral cofactor in cell pH regulation by controlling plasma membrane-type Na(+)/H(+) exchange activity. Binds to and activates SLC9A1/NHE1 in a serum-independent manner, thus increasing pH and protecting cells from serum deprivation-induced death. Also plays a role in the regulation of cell proliferation and tumor growth by increasing the phosphatase activity of PPP3CA in a calcium-dependent manner. Activator of the calcineurin/NFAT signaling pathway. Involved in the cytoplasmic translocation of the transcription factor NFATC3 to the nucleus. This Homo sapiens (Human) protein is Calcineurin B homologous protein 2 (CHP2).